The sequence spans 492 residues: Osmoregulated proline transporter OpuE (492 aa).

13 helical membrane passes run 3–23, 40–60, 62–82, 125–145, 161–181, 190–210, 224–244, 271–291, 314–334, 365–385, 394–414, 424–444, and 449–469; these read IEII…GWYA, LGPF…WMLM, VPGA…GLTI, IVSA…GMVS, GLFL…FLAV, AIMF…VGGV, LLDI…AWGL, IGMS…LIGV, ILFH…AIMS, LVMI…LLSL, LVGY…LLSL, ALAA…TGLA, and VYEI…VSMI.

This sequence belongs to the sodium:solute symporter (SSF) (TC 2.A.21) family.

It is found in the cell membrane. The enzyme catalyses L-proline(in) + Na(+)(in) = L-proline(out) + Na(+)(out). Functionally, catalyzes the uptake of extracellular proline under high-osmolarity growth conditions. Essential for the use of proline present in the environment as an osmoprotectant. The sequence is that of Osmoregulated proline transporter OpuE from Bacillus subtilis (strain 168).